The following is a 293-amino-acid chain: Elongation factor Ts (293 aa).

Residues T80 to V83 form an involved in Mg(2+) ion dislocation from EF-Tu region.

It belongs to the EF-Ts family.

The protein resides in the cytoplasm. Its function is as follows. Associates with the EF-Tu.GDP complex and induces the exchange of GDP to GTP. It remains bound to the aminoacyl-tRNA.EF-Tu.GTP complex up to the GTP hydrolysis stage on the ribosome. The polypeptide is Elongation factor Ts (Burkholderia lata (strain ATCC 17760 / DSM 23089 / LMG 22485 / NCIMB 9086 / R18194 / 383)).